We begin with the raw amino-acid sequence, 508 residues long: Putative glycosyl hydrolase ecdF (508 aa).

The N-terminal stretch at 1–15 (MFLHILCLLAGQALA) is a signal peptide. Asn99, Asn122, Asn275, and Asn362 each carry an N-linked (GlcNAc...) asparagine glycan.

It belongs to the glycosyl hydrolase 32 family.

The protein is Putative glycosyl hydrolase ecdF of Aspergillus rugulosus (Emericella rugulosa).